Reading from the N-terminus, the 273-residue chain is MQLEKIQSDVEDIWKNRSKLSNRSVKRAARVIIKKVIKLLDSGKIRVAERLSDGKWIVHTWIKQAISLYFLTEESKMIDHTGWWFDKVNNKFDGWNEEEFHQSKIRAVPGCFVRQSAYVGTNVVLMPSFINVGAYISSGTMIDTWSTIGSCAQIGKNCHVSGGVGIGGVLEPIQASPVIIEDNCFIGARSEVAEGVIIREGSVLGMGVFIGASTKIIDRETNKVFYGEVPPYSVVVPGSTLSANNISIYCAIIVKKVDEKTRQKTSINEILRD.

Residues Arg106 and Asp143 each coordinate substrate.

The protein belongs to the transferase hexapeptide repeat family. As to quaternary structure, homotrimer.

Its subcellular location is the cytoplasm. It catalyses the reaction (S)-2,3,4,5-tetrahydrodipicolinate + succinyl-CoA + H2O = (S)-2-succinylamino-6-oxoheptanedioate + CoA. It functions in the pathway amino-acid biosynthesis; L-lysine biosynthesis via DAP pathway; LL-2,6-diaminopimelate from (S)-tetrahydrodipicolinate (succinylase route): step 1/3. The protein is 2,3,4,5-tetrahydropyridine-2,6-dicarboxylate N-succinyltransferase of Wolbachia sp. subsp. Brugia malayi (strain TRS).